The following is a 494-amino-acid chain: Aspartyl/glutamyl-tRNA(Asn/Gln) amidotransferase subunit B (494 aa).

It belongs to the GatB/GatE family. GatB subfamily. In terms of assembly, heterotrimer of A, B and C subunits.

It carries out the reaction L-glutamyl-tRNA(Gln) + L-glutamine + ATP + H2O = L-glutaminyl-tRNA(Gln) + L-glutamate + ADP + phosphate + H(+). The enzyme catalyses L-aspartyl-tRNA(Asn) + L-glutamine + ATP + H2O = L-asparaginyl-tRNA(Asn) + L-glutamate + ADP + phosphate + 2 H(+). Functionally, allows the formation of correctly charged Asn-tRNA(Asn) or Gln-tRNA(Gln) through the transamidation of misacylated Asp-tRNA(Asn) or Glu-tRNA(Gln) in organisms which lack either or both of asparaginyl-tRNA or glutaminyl-tRNA synthetases. The reaction takes place in the presence of glutamine and ATP through an activated phospho-Asp-tRNA(Asn) or phospho-Glu-tRNA(Gln). The protein is Aspartyl/glutamyl-tRNA(Asn/Gln) amidotransferase subunit B of Synechococcus elongatus (strain ATCC 33912 / PCC 7942 / FACHB-805) (Anacystis nidulans R2).